A 443-amino-acid chain; its full sequence is Chromosomal replication initiator protein DnaA (443 aa).

The interval 1–76 (METKALWEKL…KSVLNSYVSV (76 aa)) is domain I, interacts with DnaA modulators. The domain II stretch occupies residues 76–99 (VDFLTKEIFEKNTKKENKKEPINT). The domain III, AAA+ region stretch occupies residues 100-320 (VLSENALTFE…GLVNRLLFFG (221 aa)). Residues G145, G147, K148, and T149 each coordinate ATP. A domain IV, binds dsDNA region spans residues 321-443 (IQNDLGHIID…ESLKNEIIGK (123 aa)).

This sequence belongs to the DnaA family. In terms of assembly, oligomerizes as a right-handed, spiral filament on DNA at oriC.

The protein localises to the cytoplasm. Functionally, plays an essential role in the initiation and regulation of chromosomal replication. ATP-DnaA binds to the origin of replication (oriC) to initiate formation of the DNA replication initiation complex once per cell cycle. Binds the DnaA box (a 9 base pair repeat at the origin) and separates the double-stranded (ds)DNA. Forms a right-handed helical filament on oriC DNA; dsDNA binds to the exterior of the filament while single-stranded (ss)DNA is stabiized in the filament's interior. The ATP-DnaA-oriC complex binds and stabilizes one strand of the AT-rich DNA unwinding element (DUE), permitting loading of DNA polymerase. After initiation quickly degrades to an ADP-DnaA complex that is not apt for DNA replication. Binds acidic phospholipids. This chain is Chromosomal replication initiator protein DnaA, found in Mesoplasma florum (strain ATCC 33453 / NBRC 100688 / NCTC 11704 / L1) (Acholeplasma florum).